A 37-amino-acid polypeptide reads, in one-letter code: Large ribosomal subunit protein bL36c (37 aa).

Belongs to the bacterial ribosomal protein bL36 family.

Its subcellular location is the plastid. The protein is Large ribosomal subunit protein bL36c of Cuscuta reflexa (Southern Asian dodder).